The chain runs to 332 residues: L-lactate dehydrogenase A chain (332 aa).

Ala-2 is subject to N-acetylalanine. An N6-acetyllysine; alternate modification is found at Lys-5. Position 5 is an N6-succinyllysine; alternate (Lys-5). Tyr-10 carries the post-translational modification Phosphotyrosine. At Lys-14 the chain carries N6-acetyllysine. Thr-18 carries the post-translational modification Phosphothreonine. 29-57 is an NAD(+) binding site; the sequence is GAVGMACAISILMKDLADELALVDVIEDK. Lys-57 carries the post-translational modification N6-acetyllysine; alternate. Lys-57 is covalently cross-linked (Glycyl lysine isopeptide (Lys-Gly) (interchain with G-Cter in SUMO2); alternate). Residue Lys-81 is modified to N6-acetyllysine. Position 99 (Arg-99) interacts with NAD(+). Residue Arg-106 coordinates substrate. N6-acetyllysine; alternate is present on Lys-118. Lys-118 carries the N6-succinyllysine; alternate modification. The residue at position 126 (Lys-126) is an N6-acetyllysine. Asn-138 serves as a coordination point for NAD(+). The substrate site is built by Asn-138 and Arg-169. His-193 acts as the Proton acceptor in catalysis. N6-acetyllysine occurs at positions 224 and 232. The residue at position 239 (Tyr-239) is a Phosphotyrosine. Lys-243 carries the N6-acetyllysine modification. Thr-248 provides a ligand contact to substrate. Thr-309 bears the Phosphothreonine mark. Ser-310 bears the Phosphoserine mark. The residue at position 318 (Lys-318) is an N6-acetyllysine; alternate. Lys-318 carries the post-translational modification N6-succinyllysine; alternate. A Phosphothreonine modification is found at Thr-322.

This sequence belongs to the LDH/MDH superfamily. LDH family. Homotetramer. Interacts with PTEN upstream reading frame protein MP31. Interacts with folliculin FLCN; the interaction is direct and inhibits enzymatic activity. Post-translationally, ISGylated. In terms of tissue distribution, predominantly expressed in anaerobic tissues such as skeletal muscle and liver.

It is found in the cytoplasm. It carries out the reaction (S)-lactate + NAD(+) = pyruvate + NADH + H(+). The protein operates within fermentation; pyruvate fermentation to lactate; (S)-lactate from pyruvate: step 1/1. Fermentation of pyruvate to lactate is inhibited when bound to folliculin FLCN, perhaps partly by FLCN preventing binding of cofactor NADH. Interconverts simultaneously and stereospecifically pyruvate and lactate with concomitant interconversion of NADH and NAD(+). This chain is L-lactate dehydrogenase A chain, found in Homo sapiens (Human).